The chain runs to 444 residues: Cysteine proteinase 2 (444 aa).

Positions 1 to 19 form a signal peptide, or 27; sequence MATSRAALCAVAVVCVVLA. A propeptide spans 20–124 (activation peptide); sequence AACAPARAIH…HYRKARADLS (105 aa). Cysteine 147 and cysteine 188 form a disulfide bridge. The active site involves cysteine 150. Asparagine 228 carries N-linked (GlcNAc...) asparagine glycosylation. Catalysis depends on residues histidine 289 and asparagine 309. Asparagine 372 carries an N-linked (GlcNAc...) asparagine glycan.

Belongs to the peptidase C1 family.

It is found in the lysosome. Functionally, the cysteine proteinases have a potential role in host-parasite interaction and virulence. The sequence is that of Cysteine proteinase 2 (CYS2) from Leishmania pifanoi.